A 242-amino-acid chain; its full sequence is DnaJ homolog subfamily B member 3 (242 aa).

In terms of domain architecture, J spans 1 to 69 (MVDYYEVLGV…RKREVYDRCG (69 aa)).

In terms of tissue distribution, testis specific. Expression is confined to the germline without any contribution of the somatic components.

Functionally, may operate as a co-chaperone of the male germ cell- and haploid stage-specific Hsp70 proteins. In Mus musculus (Mouse), this protein is DnaJ homolog subfamily B member 3 (Dnajb3).